The primary structure comprises 483 residues: MKRKSEGRSSWAAATCSPCCSLTSPSVKKIRSPTQQDPRHRDPQDDVYLDITDRLRLAILYSRPKSASNVHYFSIDNELEYENFSEDFGPLNLAMVYRYCCKINKKLKSITMLRKKIVHFTGSDQRKQANAAFLVGCYMVIYLGRTPEEAYRTLIFGDTSYIPFRDAAYGSCNFYITLLDCFHAVKKAMQYGFLNFNSFNLDEYEHYEKAENGDLNWIIPDRFIAFCGPHSRARLESGYHQHSPETYIQYFKNRNVTTIIRLNKKMYDAKCFTDAGFDHHDLFFADGSSPTDAIVKGFLDICENAEGAIAVHCKAGLGRTGTLIACYIMKHYRMTAAETIAWVRICRPGLVIGPQQQFLVMKQTSLWLEGDYFCQKLKGQENGQHRAAFPKLHSGVDDISINGVENQDQQEPEPYSDDDEINGGTQGDRLRALKSRRQSKTNAILLTCPLAVLTSALCSVVIWWIVCDYILPILLFCLDGFGT.

A disordered region spans residues 1–45 (MKRKSEGRSSWAAATCSPCCSLTSPSVKKIRSPTQQDPRHRDPQD). The short motif at 1–53 (MKRKSEGRSSWAAATCSPCCSLTSPSVKKIRSPTQQDPRHRDPQDDVYLDITD) is the Nucleolar localization signal element. A compositionally biased stretch (low complexity) spans 12 to 26 (AAATCSPCCSLTSPS). Residues 43–197 (PQDDVYLDIT…AMQYGFLNFN (155 aa)) are a. Residues 198–211 (SFNLDEYEHYEKAE) form a linker region. The segment at 212 to 378 (NGDLNWIIPD…EGDYFCQKLK (167 aa)) is b. The Tyrosine-protein phosphatase domain maps to 213 to 373 (GDLNWIIPDR…TSLWLEGDYF (161 aa)). The active-site Phosphocysteine intermediate is Cys313. The interval 407 to 426 (QDQQEPEPYSDDDEINGGTQ) is disordered. Residues 408–421 (DQQEPEPYSDDDEI) are compositionally biased toward acidic residues. Residues 444 to 466 (ILLTCPLAVLTSALCSVVIWWIV) form a helical membrane-spanning segment.

This sequence belongs to the protein-tyrosine phosphatase family. Non-receptor class CDC14 subfamily.

It is found in the membrane. The protein localises to the nucleus. Its subcellular location is the nucleolus. It localises to the cytoplasm. The protein resides in the cytoskeleton. The enzyme catalyses O-phospho-L-tyrosyl-[protein] + H2O = L-tyrosyl-[protein] + phosphate. It carries out the reaction O-phospho-L-seryl-[protein] + H2O = L-seryl-[protein] + phosphate. It catalyses the reaction O-phospho-L-threonyl-[protein] + H2O = L-threonyl-[protein] + phosphate. Dual-specificity phosphatase. Preferentially dephosphorylates proteins modified by proline-directed kinases. In Symphalangus syndactylus (Siamang), this protein is Dual specificity protein phosphatase CDC14C.